The sequence spans 221 residues: Very-long-chain (3R)-3-hydroxyacyl-CoA dehydratase PASTICCINO 2A (221 aa).

The Cytoplasmic segment spans residues 1–11 (MAGVGSAVRRL). A helical membrane pass occupies residues 12 to 32 (YLSVYNWAVFFGWAQVLYYAV). At 33-51 (TTLLESGHEAVYAAVERPL) the chain is on the lumenal side. Residues 52–70 (QFAQTAAFLEILHGLVGLV) traverse the membrane as a helical segment. Topologically, residues 71 to 76 (RSPVSA) are cytoplasmic. A helical membrane pass occupies residues 77 to 95 (TLPQIGSRLFLTWGILWSF). Residues 96–100 (PETHS) are Lumenal-facing. Residues 101 to 121 (HILVTSLVISWSITEIIRYSF) traverse the membrane as a helical segment. Residues 122 to 141 (FGMKEAFGFAPSWLLWLRYS) are Cytoplasmic-facing. A helical membrane pass occupies residues 142-165 (TFMVLYPTGISSEVGLIYIALPYM). Residues Y147 and E154 contribute to the active site. Residues 166-184 (KASEKYCLRMPNKWNFSFD) lie on the Lumenal side of the membrane. The chain crosses the membrane as a helical span at residues 185–209 (FFYASILSLAIYVPGSPHMFTYMLA). Over 210–221 (QRKKALAKAKAA) the chain is Cytoplasmic.

It belongs to the very long-chain fatty acids dehydratase HACD family.

It localises to the endoplasmic reticulum membrane. The catalysed reaction is a very-long-chain (3R)-3-hydroxyacyl-CoA = a very-long-chain (2E)-enoyl-CoA + H2O. The protein operates within lipid metabolism; fatty acid biosynthesis. Functionally, catalyzes the third of the four reactions of the long-chain fatty acids elongation cycle. This endoplasmic reticulum-bound enzymatic process, allows the addition of two carbons to the chain of long- and very long-chain fatty acids/VLCFAs per cycle. This enzyme catalyzes the dehydration of the 3-hydroxyacyl-CoA intermediate into trans-2,3-enoyl-CoA, within each cycle of fatty acid elongation. Thereby, it participates in the production of VLCFAs of different chain lengths that are involved in multiple biological processes as precursors of membrane lipids and lipid mediators. May be an anti-phosphatase that prevents CDKA-1 dephosphorylation and activation. Involved in the hormonal control of cell division and differentiation. Required for proliferation control of meristematic and non-meristematic cells. Negative regulator of the cell cycle. This chain is Very-long-chain (3R)-3-hydroxyacyl-CoA dehydratase PASTICCINO 2A (PAS2A), found in Oryza sativa subsp. japonica (Rice).